Here is a 38-residue protein sequence, read N- to C-terminus: Toxin Bot33 (38 aa).

3 disulfide bridges follow: Cys-8/Cys-28, Cys-14/Cys-33, and Cys-18/Cys-35.

It belongs to the short scorpion toxin superfamily. Potassium channel inhibitor family. In terms of tissue distribution, expressed by the venom gland.

It localises to the secreted. Its function is as follows. A probable toxin that has no activity on the tested mammalian voltage-gated potassium channels (when tested at 1 uM) and is not toxic to mice. It resembles alpha toxins that block voltage-gated potassium channels. In Buthus occitanus tunetanus (Common European scorpion), this protein is Toxin Bot33.